A 300-amino-acid chain; its full sequence is Cation-efflux pump FieF (300 aa).

Transmembrane regions (helical) follow at residues 11–31 (LAAVSATAVALVLFIMKVFAW), 40–60 (LASLVDSLVDIAASLVNLLVV), 81–101 (LAALAQSMFISGSALFLILTG), and 114–134 (PEVGMWVTLIALVATLLLVSF). D45 and D49 together coordinate Zn(2+). H153 and D157 together coordinate Zn(2+). Transmembrane regions (helical) follow at residues 156–176 (SDLLMNGAILVALALSWKGIT) and 182–202 (FALGIGGYILYSALRMGYDAV).

It belongs to the cation diffusion facilitator (CDF) transporter (TC 2.A.4) family. FieF subfamily. As to quaternary structure, homodimer.

Its subcellular location is the cell inner membrane. The enzyme catalyses Zn(2+)(in) + H(+)(out) = Zn(2+)(out) + H(+)(in). The catalysed reaction is Cd(2+)(in) + H(+)(out) = Cd(2+)(out) + H(+)(in). It catalyses the reaction Fe(2+)(in) + H(+)(out) = Fe(2+)(out) + H(+)(in). In terms of biological role, divalent metal cation transporter which exports Zn(2+), Cd(2+) and possibly Fe(2+). May be involved in zinc and iron detoxification by efflux. The sequence is that of Cation-efflux pump FieF from Pectobacterium carotovorum subsp. carotovorum (strain PC1).